The sequence spans 370 residues: Cytochrome b (370 aa).

Transmembrane regions (helical) follow at residues 25–45, 69–90, 105–125, and 170–190; these read FGSMLLACSTLQVLTGFFLAV, WLMQNLHAIGASMFFICIYIHI, WLSGTMLLIMLMATAFFGYVL, and FFALHFILPFGIISLSSLHVI. His-75 and His-89 together coordinate heme b. Positions 174 and 188 each coordinate heme b. Residue His-193 coordinates a ubiquinone. Transmembrane regions (helical) follow at residues 218-238, 280-300, 312-332, and 339-358; these read YKDLLMLTIMTILLLLIVSFS, LGGALALTMSIIILMTVPFTH, FMQMTFWMFAATFLVITWTAT, and FTLIGQMASMLYFLFFISNP.

This sequence belongs to the cytochrome b family. The cytochrome bc1 complex contains 3 respiratory subunits (MT-CYB, CYC1 and UQCRFS1), 2 core proteins (UQCRC1 and UQCRC2) and probably 6 low-molecular weight proteins. It depends on heme b as a cofactor.

The protein resides in the mitochondrion inner membrane. Its function is as follows. Component of the ubiquinol-cytochrome c reductase complex (complex III or cytochrome b-c1 complex) that is part of the mitochondrial respiratory chain. The b-c1 complex mediates electron transfer from ubiquinol to cytochrome c. Contributes to the generation of a proton gradient across the mitochondrial membrane that is then used for ATP synthesis. This is Cytochrome b (MT-CYB) from Eunectes murinus (Green anaconda).